A 254-amino-acid polypeptide reads, in one-letter code: tRNA (guanine-N(7)-)-methyltransferase (254 aa).

The S-adenosyl-L-methionine site is built by Glu82, Glu107, Asp134, and Asp157. Residue Asp157 is part of the active site. Substrate-binding positions include Lys161, Asp193, and Thr233–Glu236.

This sequence belongs to the class I-like SAM-binding methyltransferase superfamily. TrmB family.

The enzyme catalyses guanosine(46) in tRNA + S-adenosyl-L-methionine = N(7)-methylguanosine(46) in tRNA + S-adenosyl-L-homocysteine. It participates in tRNA modification; N(7)-methylguanine-tRNA biosynthesis. Its function is as follows. Catalyzes the formation of N(7)-methylguanine at position 46 (m7G46) in tRNA. This chain is tRNA (guanine-N(7)-)-methyltransferase, found in Corynebacterium jeikeium (strain K411).